Consider the following 341-residue polypeptide: Large ribosomal subunit protein uL3 (341 aa).

2 disordered regions span residues 1–31 (MGHR…SPRS) and 234–261 (HRKG…GQMG).

It belongs to the universal ribosomal protein uL3 family. Part of the 50S ribosomal subunit. Forms a cluster with proteins L14 and L24e.

One of the primary rRNA binding proteins, it binds directly near the 3'-end of the 23S rRNA, where it nucleates assembly of the 50S subunit. The chain is Large ribosomal subunit protein uL3 from Metallosphaera sedula (strain ATCC 51363 / DSM 5348 / JCM 9185 / NBRC 15509 / TH2).